A 694-amino-acid polypeptide reads, in one-letter code: Nuclear cap-binding protein subunit 3 (694 aa).

The disordered stretch occupies residues 1–47 (MAAVRSLRVSVKSDSASDRSESDSESDSDRDAREAEPMEVEEGEVEL). Residues 15–36 (SASDRSESDSESDSDRDAREAE) show a composition bias toward basic and acidic residues. Positions 37 to 47 (PMEVEEGEVEL) are enriched in acidic residues. The segment at 126–187 (EALHMSGVDD…LSRMPDKEEV (62 aa)) is RNA recognition motif (RRM) domain. Residues 155 to 158 (WIDD) carry the WLDD motif; essential for 7-methylguanosine-containing mRNA cap binding motif. 3 disordered regions span residues 183–277 (DKEE…VKPF), 336–430 (ILKT…MDYD), and 461–694 (LRNS…DSDS). Over residues 189 to 203 (NTDSSKPSELPVQTQ) the composition is skewed to polar residues. Residues 212-235 (DDDDDDDEEEEGEVDDDDDDDEED) are compositionally biased toward acidic residues. Over residues 236–264 (EKARDIEDETEKKPQETRETSLSQAERDS) the composition is skewed to basic and acidic residues. Over residues 368 to 386 (EPIEEEEEEEEDGEEDMDA) the composition is skewed to acidic residues. Residues 387-404 (DDRVVEYKDRGEKERGPR) show a composition bias toward basic and acidic residues. The segment covering 477-496 (IGGGGGGGSGGAVEGRGEGG) has biased composition (gly residues). Composition is skewed to basic and acidic residues over residues 501–517 (TSEKVTDVRQLLEEKRQ), 563–595 (SRREPLSDVRSRLGVAKHDNRSLFSEPPKDKKT), and 605–618 (SHKDSGSGDEDKPS). Acidic residues predominate over residues 634-646 (DSDGVEDEDEEDD). Positions 685-694 (DGSNGSDSDS) are enriched in low complexity.

It belongs to the NCBP3 family. In terms of assembly, component of an alternative cap-binding complex (CBC) composed of NCBP1/CBP80 and NCBP3.

The protein localises to the nucleus. Its subcellular location is the cytoplasm. Functionally, associates with NCBP1/CBP80 to form an alternative cap-binding complex (CBC) which plays a key role in mRNA export. NCBP3 serves as adapter protein linking the capped RNAs (m7GpppG-capped RNA) to NCBP1/CBP80. Unlike the conventional CBC with NCBP2 which binds both small nuclear RNA (snRNA) and messenger (mRNA) and is involved in their export from the nucleus, the alternative CBC with NCBP3 does not bind snRNA and associates only with mRNA thereby playing a role in only mRNA export. The protein is Nuclear cap-binding protein subunit 3 of Danio rerio (Zebrafish).